The chain runs to 524 residues: Ribonuclease Y (524 aa).

The helical transmembrane segment at 7–27 (LGGLLTGIVIAIIASIIASVI) threads the bilayer. The 86-residue stretch at 214-299 (TVSVVPLPND…EMVEKARKEV (86 aa)) folds into the KH domain. The HD domain maps to 340-433 (VLSHSIEVAR…VQAADSISAA (94 aa)).

Belongs to the RNase Y family.

The protein resides in the cell membrane. Endoribonuclease that initiates mRNA decay. The sequence is that of Ribonuclease Y from Acetivibrio thermocellus (strain ATCC 27405 / DSM 1237 / JCM 9322 / NBRC 103400 / NCIMB 10682 / NRRL B-4536 / VPI 7372) (Clostridium thermocellum).